The primary structure comprises 422 residues: UDP-N-acetylglucosamine 1-carboxyvinyltransferase (422 aa).

Position 22–23 (22–23) interacts with phosphoenolpyruvate; it reads KN. Residue R93 participates in UDP-N-acetyl-alpha-D-glucosamine binding. The active-site Proton donor is the C117. Position 117 is a 2-(S-cysteinyl)pyruvic acid O-phosphothioketal (C117). UDP-N-acetyl-alpha-D-glucosamine-binding positions include 122 to 126, D308, and L330; that span reads RPVDL.

It belongs to the EPSP synthase family. MurA subfamily.

It localises to the cytoplasm. The enzyme catalyses phosphoenolpyruvate + UDP-N-acetyl-alpha-D-glucosamine = UDP-N-acetyl-3-O-(1-carboxyvinyl)-alpha-D-glucosamine + phosphate. The protein operates within cell wall biogenesis; peptidoglycan biosynthesis. Cell wall formation. Adds enolpyruvyl to UDP-N-acetylglucosamine. The chain is UDP-N-acetylglucosamine 1-carboxyvinyltransferase from Helicobacter pylori (strain HPAG1).